A 428-amino-acid polypeptide reads, in one-letter code: Tol-Pal system protein TolB (428 aa).

Positions 1–24 are cleaved as a signal peptide; the sequence is MPSLKTLLRGVLVAAMLVAGSARA.

This sequence belongs to the TolB family. As to quaternary structure, the Tol-Pal system is composed of five core proteins: the inner membrane proteins TolA, TolQ and TolR, the periplasmic protein TolB and the outer membrane protein Pal. They form a network linking the inner and outer membranes and the peptidoglycan layer.

The protein resides in the periplasm. Its function is as follows. Part of the Tol-Pal system, which plays a role in outer membrane invagination during cell division and is important for maintaining outer membrane integrity. The polypeptide is Tol-Pal system protein TolB (Chromobacterium violaceum (strain ATCC 12472 / DSM 30191 / JCM 1249 / CCUG 213 / NBRC 12614 / NCIMB 9131 / NCTC 9757 / MK)).